Here is a 616-residue protein sequence, read N- to C-terminus: Dihydroxy-acid dehydratase (616 aa).

Asp-81 contributes to the Mg(2+) binding site. A [2Fe-2S] cluster-binding site is contributed by Cys-122. Positions 123 and 124 each coordinate Mg(2+). The residue at position 124 (Lys-124) is an N6-carboxylysine. Cys-195 contacts [2Fe-2S] cluster. Residue Glu-491 coordinates Mg(2+). The Proton acceptor role is filled by Ser-517.

The protein belongs to the IlvD/Edd family. As to quaternary structure, homodimer. The cofactor is [2Fe-2S] cluster. Requires Mg(2+) as cofactor.

It carries out the reaction (2R)-2,3-dihydroxy-3-methylbutanoate = 3-methyl-2-oxobutanoate + H2O. It catalyses the reaction (2R,3R)-2,3-dihydroxy-3-methylpentanoate = (S)-3-methyl-2-oxopentanoate + H2O. The protein operates within amino-acid biosynthesis; L-isoleucine biosynthesis; L-isoleucine from 2-oxobutanoate: step 3/4. It participates in amino-acid biosynthesis; L-valine biosynthesis; L-valine from pyruvate: step 3/4. Its function is as follows. Functions in the biosynthesis of branched-chain amino acids. Catalyzes the dehydration of (2R,3R)-2,3-dihydroxy-3-methylpentanoate (2,3-dihydroxy-3-methylvalerate) into 2-oxo-3-methylpentanoate (2-oxo-3-methylvalerate) and of (2R)-2,3-dihydroxy-3-methylbutanoate (2,3-dihydroxyisovalerate) into 2-oxo-3-methylbutanoate (2-oxoisovalerate), the penultimate precursor to L-isoleucine and L-valine, respectively. The protein is Dihydroxy-acid dehydratase of Escherichia coli (strain 55989 / EAEC).